Reading from the N-terminus, the 443-residue chain is COP9 signalosome complex subunit 2 (443 aa).

The PCI domain occupies 254–416 (AHTDFFEAFK…QLLELDHQKR (163 aa)).

The protein belongs to the CSN2 family. In terms of assembly, component of the CSN complex, probably composed of cops1, cops2, cops3, cops4, cops5, cops6, cops7, cops8 and cops9.

The protein resides in the cytoplasm. The protein localises to the nucleus. In terms of biological role, essential component of the COP9 signalosome complex (CSN), a complex involved in various cellular and developmental processes. The CSN complex is an essential regulator of the ubiquitin (Ubl) conjugation pathway by mediating the deneddylation of the cullin subunits of E3 ligase complexes, leading to modify the Ubl ligase activity. The chain is COP9 signalosome complex subunit 2 (cops2) from Danio rerio (Zebrafish).